Consider the following 212-residue polypeptide: Transcription antitermination protein NusB (212 aa).

2 disordered regions span residues 1 to 34 and 169 to 212; these read MSDE…SKSN and EHDR…QAAG. Residues 178 to 212 show a composition bias toward low complexity; it reads APAQPAAKADTATDAVADAATDAAAADDAADQAAG.

The protein belongs to the NusB family.

Its function is as follows. Involved in transcription antitermination. Required for transcription of ribosomal RNA (rRNA) genes. Binds specifically to the boxA antiterminator sequence of the ribosomal RNA (rrn) operons. This Delftia acidovorans (strain DSM 14801 / SPH-1) protein is Transcription antitermination protein NusB.